Consider the following 278-residue polypeptide: Probable endonuclease 4 (278 aa).

His-66, His-106, Glu-142, Asp-176, His-179, His-213, Asp-226, His-228, and Glu-258 together coordinate Zn(2+).

It belongs to the AP endonuclease 2 family. The cofactor is Zn(2+).

The enzyme catalyses Endonucleolytic cleavage to 5'-phosphooligonucleotide end-products.. Functionally, endonuclease IV plays a role in DNA repair. It cleaves phosphodiester bonds at apurinic or apyrimidinic (AP) sites, generating a 3'-hydroxyl group and a 5'-terminal sugar phosphate. The chain is Probable endonuclease 4 from Halothermothrix orenii (strain H 168 / OCM 544 / DSM 9562).